Reading from the N-terminus, the 1375-residue chain is DNA-directed RNA polymerase subunit beta' (1375 aa).

Cysteine 70, cysteine 72, cysteine 85, and cysteine 88 together coordinate Zn(2+). 3 residues coordinate Mg(2+): aspartate 461, aspartate 463, and aspartate 465. Cysteine 797, cysteine 871, cysteine 878, and cysteine 881 together coordinate Zn(2+).

The protein belongs to the RNA polymerase beta' chain family. As to quaternary structure, the RNAP catalytic core consists of 2 alpha, 1 beta, 1 beta' and 1 omega subunit. When a sigma factor is associated with the core the holoenzyme is formed, which can initiate transcription. Requires Mg(2+) as cofactor. The cofactor is Zn(2+).

It carries out the reaction RNA(n) + a ribonucleoside 5'-triphosphate = RNA(n+1) + diphosphate. DNA-dependent RNA polymerase catalyzes the transcription of DNA into RNA using the four ribonucleoside triphosphates as substrates. This Neorickettsia sennetsu (strain ATCC VR-367 / Miyayama) (Ehrlichia sennetsu) protein is DNA-directed RNA polymerase subunit beta'.